The sequence spans 142 residues: Acetyltransferase SG1711 (142 aa).

The 142-residue stretch at Met1 to Tyr142 folds into the N-acetyltransferase domain.

This sequence belongs to the acetyltransferase family. YpeA subfamily.

In Sodalis glossinidius (strain morsitans), this protein is Acetyltransferase SG1711.